Here is a 388-residue protein sequence, read N- to C-terminus: L-lactate dehydrogenase (388 aa).

The region spanning 1 to 380 is the FMN hydroxy acid dehydrogenase domain; that stretch reads MIISAASDYR…SADALSRVTR (380 aa). Y24 contributes to the substrate binding site. The FMN site is built by S106 and Q127. Y129 lines the substrate pocket. Residue T155 participates in FMN binding. Position 164 (R164) interacts with substrate. An FMN-binding site is contributed by K251. The active-site Proton acceptor is H275. Residue R278 coordinates substrate. 306–330 provides a ligand contact to FMN; that stretch reads DSGIRSGLDVVRMLALGADAVLLGR.

The protein belongs to the FMN-dependent alpha-hydroxy acid dehydrogenase family. The cofactor is FMN.

Its subcellular location is the cell inner membrane. The catalysed reaction is (S)-lactate + A = pyruvate + AH2. Functionally, catalyzes the conversion of L-lactate to pyruvate. Is coupled to the respiratory chain. The protein is L-lactate dehydrogenase of Xanthomonas oryzae pv. oryzae (strain MAFF 311018).